The chain runs to 189 residues: GMP synthase [glutamine-hydrolyzing] subunit A (189 aa).

Positions 5 to 189 constitute a Glutamine amidotransferase type-1 domain; it reads KILVVNNYGQ…TNFFEVCDRY (185 aa). Cys-79 acts as the Nucleophile in catalysis. Catalysis depends on residues His-166 and Glu-168.

As to quaternary structure, heterodimer composed of a glutamine amidotransferase subunit (A) and a GMP-binding subunit (B).

It catalyses the reaction XMP + L-glutamine + ATP + H2O = GMP + L-glutamate + AMP + diphosphate + 2 H(+). The protein operates within purine metabolism; GMP biosynthesis; GMP from XMP (L-Gln route): step 1/1. Functionally, catalyzes the synthesis of GMP from XMP. This is GMP synthase [glutamine-hydrolyzing] subunit A from Methanosarcina acetivorans (strain ATCC 35395 / DSM 2834 / JCM 12185 / C2A).